The chain runs to 286 residues: NADPH-dependent 7-cyano-7-deazaguanine reductase (286 aa).

A substrate-binding site is contributed by 92-94; sequence IES. 94–95 is an NADPH binding site; that stretch reads SK. Residue C194 is the Thioimide intermediate of the active site. The active-site Proton donor is the D201. 233 to 234 lines the substrate pocket; that stretch reads HE. 262 to 263 lines the NADPH pocket; sequence RG.

The protein belongs to the GTP cyclohydrolase I family. QueF type 2 subfamily. In terms of assembly, homodimer.

The protein resides in the cytoplasm. The enzyme catalyses 7-aminomethyl-7-carbaguanine + 2 NADP(+) = 7-cyano-7-deazaguanine + 2 NADPH + 3 H(+). The protein operates within tRNA modification; tRNA-queuosine biosynthesis. Functionally, catalyzes the NADPH-dependent reduction of 7-cyano-7-deazaguanine (preQ0) to 7-aminomethyl-7-deazaguanine (preQ1). This Shewanella sp. (strain MR-4) protein is NADPH-dependent 7-cyano-7-deazaguanine reductase.